The following is a 93-amino-acid chain: Protein FptB (93 aa).

The signal sequence occupies residues 1–25 (MPRQSGFGWAWRVPLALAGSLAAAT). A run of 2 helical transmembrane segments spans residues 44–64 (LYAGLFGALGVGLLLLVGGLL) and 71–91 (FAWRLGGSLLVLGLALWLLAG).

It is found in the cell membrane. In terms of biological role, may play some role in transport of Fe(3+)-pyochelin. This Pseudomonas aeruginosa (strain ATCC 15692 / DSM 22644 / CIP 104116 / JCM 14847 / LMG 12228 / 1C / PRS 101 / PAO1) protein is Protein FptB (fptB).